The primary structure comprises 166 residues: Protein-export protein SecB (166 aa).

This sequence belongs to the SecB family. Homotetramer, a dimer of dimers. One homotetramer interacts with 1 SecA dimer.

The protein resides in the cytoplasm. One of the proteins required for the normal export of preproteins out of the cell cytoplasm. It is a molecular chaperone that binds to a subset of precursor proteins, maintaining them in a translocation-competent state. It also specifically binds to its receptor SecA. This chain is Protein-export protein SecB, found in Actinobacillus pleuropneumoniae serotype 5b (strain L20).